The following is a 288-amino-acid chain: Transposase InsF for insertion sequence IS3A (288 aa).

Residues 124-287 (YASGPNQKWA…SPEQFENKNL (164 aa)) form the Integrase catalytic domain.

It belongs to the transposase IS3/IS150/IS904 family.

Its function is as follows. Involved in the transposition of the insertion sequence IS3. The polypeptide is Transposase InsF for insertion sequence IS3A (insF1) (Escherichia coli (strain K12)).